A 238-amino-acid chain; its full sequence is uncharacterized protein (238 aa).

The protein belongs to the chlamydial CPn_0658/CT_538/TC_0825 family.

This is an uncharacterized protein from Chlamydia muridarum (strain MoPn / Nigg).